A 512-amino-acid polypeptide reads, in one-letter code: Maturase K (512 aa).

This sequence belongs to the intron maturase 2 family. MatK subfamily.

The protein localises to the plastid. It is found in the chloroplast. Usually encoded in the trnK tRNA gene intron. Probably assists in splicing its own and other chloroplast group II introns. The sequence is that of Maturase K from Erythranthe guttata (Yellow monkey flower).